A 136-amino-acid polypeptide reads, in one-letter code: Small ribosomal subunit protein uS9 (136 aa).

Belongs to the universal ribosomal protein uS9 family.

This is Small ribosomal subunit protein uS9 from Borrelia hermsii (strain HS1 / DAH).